Reading from the N-terminus, the 240-residue chain is Ion-translocating oxidoreductase complex subunit E (240 aa).

Transmembrane regions (helical) follow at residues 41 to 61 (LGLG…VSLV), 71 to 91 (LPAF…LMQA), 95 to 115 (ELYQ…VILG), 130 to 150 (SFDG…LGGL), and 184 to 204 (GFLL…LIAL).

This sequence belongs to the NqrDE/RnfAE family. In terms of assembly, the complex is composed of six subunits: RnfA, RnfB, RnfC, RnfD, RnfE and RnfG.

The protein resides in the cell inner membrane. Part of a membrane-bound complex that couples electron transfer with translocation of ions across the membrane. In Pseudomonas aeruginosa (strain ATCC 15692 / DSM 22644 / CIP 104116 / JCM 14847 / LMG 12228 / 1C / PRS 101 / PAO1), this protein is Ion-translocating oxidoreductase complex subunit E.